The sequence spans 509 residues: H/ACA ribonucleoprotein complex subunit DKC1 (509 aa).

The disordered stretch occupies residues 1 to 25; that stretch reads MADAEAAMTFPKKHKKKKERKPLPE. Position 2 is an N-acetylalanine (Ala-2). The interval 2–22 is nucleolar localization; sequence ADAEAAMTFPKKHKKKKERKP. Positions 11-20 are enriched in basic residues; it reads PKKHKKKKER. Glycyl lysine isopeptide (Lys-Gly) (interchain with G-Cter in SUMO2) cross-links involve residues Lys-21, Lys-40, and Lys-44. Asp-126 (nucleophile) is an active-site residue. Residue Lys-192 forms a Glycyl lysine isopeptide (Lys-Gly) (interchain with G-Cter in SUMO2) linkage. Residues 297-372 enclose the PUA domain; sequence HKRLVMKDSA…VVAKIKRVIM (76 aa). Residues 381–509 are disordered; the sequence is WGLGPKASQK…KARAAEELSG (129 aa). Ser-388 carries the phosphoserine modification. Glycyl lysine isopeptide (Lys-Gly) (interchain with G-Cter in SUMO2) cross-links involve residues Lys-395 and Lys-425. A compositionally biased stretch (basic and acidic residues) spans 416 to 425; that stretch reads DYVDYSDSSK. The interval 447 to 509 is nuclear and nucleolar localization; that stretch reads KRKRDSDSDA…KARAAEELSG (63 aa). Phosphoserine is present on residues Ser-452 and Ser-454. Position 460 is a phosphothreonine (Thr-460). The span at 466–475 shows a compositional bias: basic residues; that stretch reads RVKKEKKKKK. Over residues 481 to 490 the composition is skewed to acidic residues; that stretch reads GEEAAEDGDG. A Phosphoserine modification is found at Ser-508.

This sequence belongs to the pseudouridine synthase TruB family. In terms of assembly, part of the H/ACA small nucleolar ribonucleoprotein (H/ACA snoRNP) complex, which contains NHP2/NOLA2, GAR1/NOLA1, NOP10/NOLA3, and DKC1/NOLA4, which is presumed to be the catalytic subunit. The complex contains a stable core formed by binding of one or two NOP10-DKC1 heterodimers to NHP2; GAR1 subsequently binds to this core via DKC1. The complex binds a box H/ACA small nucleolar RNA (snoRNA), which may target the specific site of modification within the RNA substrate. During assembly, the complex contains NAF1 instead of GAR1/NOLA1. The complex also interacts with TERC, which contains a 3'-terminal domain related to the box H/ACA snoRNAs. Specific interactions with snoRNAs or TERC are mediated by GAR1 and NHP2. Associates with NOLC1/NOPP140. H/ACA snoRNPs interact with the SMN complex, consisting of SMN1 or SMN2, GEMIN2/SIP1, DDX20/GEMIN3, and GEMIN4. This is mediated by interaction between GAR1 and SMN1 or SMN2. The SMN complex may be required for correct assembly of the H/ACA snoRNP complex. Component of the telomerase holoenzyme complex composed of one molecule of TERT, one molecule of WRAP53/TCAB1, two molecules of H/ACA ribonucleoprotein complex subunits DKC1, NOP10, NHP2 and GAR1, and a telomerase RNA template component (TERC). The telomerase holoenzyme complex is associated with TEP1, SMG6/EST1A and POT1. Interacts with SHQ1; this interaction may lead to the stabilization of DKC1, from the time of its synthesis until its association with NOP10, NHP2, and NAF1 at the nascent H/ACA RNA. Interacts with HMBOX1. Interacts with DHX36.

The protein localises to the nucleus. The protein resides in the nucleolus. Its subcellular location is the cajal body. The enzyme catalyses uridine in 5S rRNA = pseudouridine in 5S rRNA. Catalytic subunit of H/ACA small nucleolar ribonucleoprotein (H/ACA snoRNP) complex, which catalyzes pseudouridylation of rRNA. This involves the isomerization of uridine such that the ribose is subsequently attached to C5, instead of the normal N1. Each rRNA can contain up to 100 pseudouridine ('psi') residues, which may serve to stabilize the conformation of rRNAs. Required for ribosome biogenesis and telomere maintenance. Also required for correct processing or intranuclear trafficking of TERC, the RNA component of the telomerase reverse transcriptase (TERT) holoenzyme. This Rattus norvegicus (Rat) protein is H/ACA ribonucleoprotein complex subunit DKC1 (Dkc1).